The chain runs to 948 residues: Glycine dehydrogenase (decarboxylating) (948 aa).

Lysine 696 bears the N6-(pyridoxal phosphate)lysine mark.

Belongs to the GcvP family. As to quaternary structure, the glycine cleavage system is composed of four proteins: P, T, L and H. Pyridoxal 5'-phosphate serves as cofactor.

The catalysed reaction is N(6)-[(R)-lipoyl]-L-lysyl-[glycine-cleavage complex H protein] + glycine + H(+) = N(6)-[(R)-S(8)-aminomethyldihydrolipoyl]-L-lysyl-[glycine-cleavage complex H protein] + CO2. The glycine cleavage system catalyzes the degradation of glycine. The P protein binds the alpha-amino group of glycine through its pyridoxal phosphate cofactor; CO(2) is released and the remaining methylamine moiety is then transferred to the lipoamide cofactor of the H protein. This chain is Glycine dehydrogenase (decarboxylating), found in Akkermansia muciniphila (strain ATCC BAA-835 / DSM 22959 / JCM 33894 / BCRC 81048 / CCUG 64013 / CIP 107961 / Muc).